We begin with the raw amino-acid sequence, 382 residues long: Processive diacylglycerol beta-glucosyltransferase (382 aa).

This sequence belongs to the glycosyltransferase 28 family. UgtP subfamily.

Its subcellular location is the cell membrane. The catalysed reaction is a 1,2-diacyl-3-O-(beta-D-glucopyranosyl)-sn-glycerol + UDP-alpha-D-glucose = a 1,2-diacyl-3-O-(beta-D-Glc-(1-&gt;6)-beta-D-Glc)-sn-glycerol + UDP + H(+). The enzyme catalyses a 1,2-diacyl-3-O-(beta-D-Glc-(1-&gt;6)-beta-D-Glc)-sn-glycerol + UDP-alpha-D-glucose = a 1,2-diacyl-3-O-(beta-D-Glc-(1-&gt;6)-beta-D-Glc-(1-&gt;6)-beta-D-Glc)-sn-glycerol + UDP + H(+). It catalyses the reaction a 1,2-diacyl-sn-glycerol + UDP-alpha-D-glucose = a 1,2-diacyl-3-O-(beta-D-glucopyranosyl)-sn-glycerol + UDP + H(+). It functions in the pathway glycolipid metabolism; diglucosyl-diacylglycerol biosynthesis. Functionally, processive glucosyltransferase involved in the biosynthesis of both the bilayer- and non-bilayer-forming membrane glucolipids. Is able to successively transfer up to three glucosyl residues to diacylglycerol (DAG), thereby catalyzing the formation of beta-monoglucosyl-DAG (3-O-(beta-D-glucopyranosyl)-1,2-diacyl-sn-glycerol), beta-diglucosyl-DAG (3-O-(beta-D-glucopyranosyl-beta-(1-&gt;6)-D-glucopyranosyl)-1,2-diacyl-sn-glycerol) and beta-triglucosyl-DAG (3-O-(beta-D-glucopyranosyl-beta-(1-&gt;6)-D-glucopyranosyl-beta-(1-&gt;6)-D-glucopyranosyl)-1,2-diacyl-sn-glycerol). Beta-diglucosyl-DAG is the predominant glycolipid found in Bacillales and is also used as a membrane anchor for lipoteichoic acid (LTA). Also seems to be able to form beta-tetraglucosyl-DAG, although this glycolipid has not been found in B.subtilis membrane. UgtP can only use UDP-glucose as sugar donor. The protein is Processive diacylglycerol beta-glucosyltransferase of Bacillus subtilis (strain 168).